The primary structure comprises 249 residues: Superoxide dismutase 1 copper chaperone (249 aa).

The 64-residue stretch at 6 to 69 (TYEATYAIPM…TLRNCGKDAI (64 aa)) folds into the HMA domain. His16 contacts Zn(2+). Cu cation is bound by residues Cys17 and Cys20. A disulfide bridge connects residues Cys27 and Cys64. The Cu cation site is built by Cys229 and Cys231.

Belongs to the CCS1 family. As to quaternary structure, homodimer, and heterodimer with apo-SOD1. Zinc-binding at His-16 of CCS1 and 'Glu-43' of apo-SOD1 is required for this heterodimerization. Cu(2+) serves as cofactor.

The protein localises to the cytoplasm. It is found in the mitochondrion intermembrane space. In terms of biological role, copper chaperone for apo superoxide dismutase 1 (SOD1). Binds copper ions and delivers them specifically to apo-SOD1. This Saccharomyces cerevisiae (strain ATCC 204508 / S288c) (Baker's yeast) protein is Superoxide dismutase 1 copper chaperone (CCS1).